The primary structure comprises 170 residues: Shikimate kinase (170 aa).

15–20 (GTGKTT) provides a ligand contact to ATP. Threonine 19 is a binding site for Mg(2+). The substrate site is built by aspartate 37, arginine 61, and glycine 82. ATP is bound at residue arginine 120. Arginine 138 is a binding site for substrate. Glutamine 154 contacts ATP.

This sequence belongs to the shikimate kinase family. Monomer. Mg(2+) is required as a cofactor.

The protein localises to the cytoplasm. The enzyme catalyses shikimate + ATP = 3-phosphoshikimate + ADP + H(+). It participates in metabolic intermediate biosynthesis; chorismate biosynthesis; chorismate from D-erythrose 4-phosphate and phosphoenolpyruvate: step 5/7. Catalyzes the specific phosphorylation of the 3-hydroxyl group of shikimic acid using ATP as a cosubstrate. The sequence is that of Shikimate kinase from Staphylococcus epidermidis (strain ATCC 35984 / DSM 28319 / BCRC 17069 / CCUG 31568 / BM 3577 / RP62A).